A 94-amino-acid polypeptide reads, in one-letter code: uncharacterized protein (94 aa).

The next 2 helical transmembrane spans lie at 7-24 (IFFI…SFNV) and 39-61 (AVPI…LLFL). The tract at residues 68 to 94 (TRKQKREDSPTSAPTGGVSSPEHVDVP) is disordered.

Its subcellular location is the cell membrane. This is an uncharacterized protein from Treponema pallidum (strain Nichols).